The primary structure comprises 940 residues: Phosphoenolpyruvate carboxylase (940 aa).

Active-site residues include H138 and K603.

Belongs to the PEPCase type 1 family. It depends on Mg(2+) as a cofactor.

It catalyses the reaction oxaloacetate + phosphate = phosphoenolpyruvate + hydrogencarbonate. Forms oxaloacetate, a four-carbon dicarboxylic acid source for the tricarboxylic acid cycle. The sequence is that of Phosphoenolpyruvate carboxylase from Streptococcus thermophilus (strain ATCC BAA-491 / LMD-9).